The chain runs to 95 residues: Phosphoribosyl-ATP pyrophosphatase (95 aa).

This sequence belongs to the PRA-PH family.

Its subcellular location is the cytoplasm. The enzyme catalyses 1-(5-phospho-beta-D-ribosyl)-ATP + H2O = 1-(5-phospho-beta-D-ribosyl)-5'-AMP + diphosphate + H(+). It functions in the pathway amino-acid biosynthesis; L-histidine biosynthesis; L-histidine from 5-phospho-alpha-D-ribose 1-diphosphate: step 2/9. This chain is Phosphoribosyl-ATP pyrophosphatase, found in Halobacterium salinarum (strain ATCC 29341 / DSM 671 / R1).